Reading from the N-terminus, the 183-residue chain is Seminal plasma protein BSP-30 kDa (183 aa).

A signal peptide spans 1-25; that stretch reads MAPLVGLFLIWAGASVFQQLHPVNG. The disordered stretch occupies residues 23 to 47; sequence VNGGDIPDPGSKPTPPGMADELPTE. Residues Thr-36, Thr-46, Thr-57, Thr-58, Thr-59, and Thr-64 are each glycosylated (O-linked (GalNAc...) threonine). 2 consecutive Fibronectin type-II domains span residues 92 to 136 and 137 to 183; these read FEGP…FCTE and RDEP…WKYC. Cystine bridges form between Cys-97-Cys-121, Cys-111-Cys-134, Cys-142-Cys-168, and Cys-156-Cys-183.

This sequence belongs to the seminal plasma protein family.

Its subcellular location is the secreted. Functionally, binds to spermatozoa upon ejaculation and may play a role in sperm capacitation. Displays heparin-, gelatin- and phospholipid-binding activities. This is Seminal plasma protein BSP-30 kDa from Bos taurus (Bovine).